The primary structure comprises 507 residues: FSD1-like protein (507 aa).

The stretch at 70 to 109 forms a coiled coil; that stretch reads KQEQVRKSQELQSQLSQCNNALENSEELLEFATRSLDIKE. Residues 105–162 form the COS domain; the sequence is LDIKEPEEFSKAARQIKDRVTMASAFRLSLKPKVSDNMTHLMVDFSQERQMLQTLKFL. The 105-residue stretch at 164–268 folds into the Fibronectin type-III domain; sequence VPKAPEIDPV…DPVTLETRAL (105 aa). The 194-residue stretch at 291–484 folds into the B30.2/SPRY domain; the sequence is DPTGGKGQES…LSTGMQVPSA (194 aa). A disordered region spans residues 292–345; that stretch reads PTGGKGQESKIKGKENKGSVHVTSLKKHTSGTPSPKRTSVGSRPPAVRGSRDRF. Residues 298-309 show a composition bias toward basic and acidic residues; the sequence is QESKIKGKENKG. A compositionally biased stretch (polar residues) spans 321–332; sequence SGTPSPKRTSVG. 2 positions are modified to phosphoserine: Ser-498 and Ser-501.

The protein is FSD1-like protein (Fsd1l) of Mus musculus (Mouse).